Consider the following 322-residue polypeptide: Beta-ketoacyl-[acyl-carrier-protein] synthase III (322 aa).

Catalysis depends on residues Cys113 and His247. The segment at 248-252 (QANIR) is ACP-binding. Residue Asn278 is part of the active site.

Belongs to the thiolase-like superfamily. FabH family. As to quaternary structure, homodimer.

It localises to the cytoplasm. The enzyme catalyses malonyl-[ACP] + acetyl-CoA + H(+) = 3-oxobutanoyl-[ACP] + CO2 + CoA. It functions in the pathway lipid metabolism; fatty acid biosynthesis. Functionally, catalyzes the condensation reaction of fatty acid synthesis by the addition to an acyl acceptor of two carbons from malonyl-ACP. Catalyzes the first condensation reaction which initiates fatty acid synthesis and may therefore play a role in governing the total rate of fatty acid production. Possesses both acetoacetyl-ACP synthase and acetyl transacylase activities. Its substrate specificity determines the biosynthesis of branched-chain and/or straight-chain of fatty acids. The polypeptide is Beta-ketoacyl-[acyl-carrier-protein] synthase III (Tropheryma whipplei (strain TW08/27) (Whipple's bacillus)).